A 409-amino-acid chain; its full sequence is Transcriptional regulator GME11370 (409 aa).

The segment at residues cysteine 17–cysteine 44 is a DNA-binding region (zn(2)-C6 fungal-type). A disordered region spans residues threonine 49–aspartate 83. Residues arginine 51–lysine 62 show a composition bias toward basic residues.

It localises to the nucleus. In terms of biological role, transcriptional regulator; part of the gene cluster that mediates the biosynthesis of dibenzodioxocinones such as pestalotiollide B, a novel class of inhibitors against cholesterol ester transfer protein (CEPT). The sequence is that of Transcriptional regulator GME11370 from Pestalotiopsis microspora.